The chain runs to 437 residues: MEGFKIKSVKARQVFDSRANPTVEVDITLKDGTVGRGIVPSGASTGLFEAVELRDGEETFDGKGVSKAIHHVNEQLAPLLLDMDVRDQKAIDSRLIEIDGTPNKSRLGANAILGCSMAACWAGANYYKVPLYRYLGGSAANKLPVPMVQIIGGGAHADNVIDIQDFLVIPTSAPTFSEGYEMVVNVYNAAKMIFKGAGKPVSIADEGGLWPTGFQSNEEGLKLLCESIELAGYTPGQDLGIALDIASSEFYDPERGTYRLELEKKTLTKEEMVGMLSDWVDNYPIISIEDGMSELDWEGNLLLTQKLGKKIQLIGDDLFTTNIERIRKGVEMKVDNAVLIKMNQIGTITETIETIEFTQNHGYLPVVSARSGETEDCTIVHLAIATNAGQLKVGSAARSERTAKWNEVLRIEEALGSSARYPSKGVFAAAGIQFNQY.

Gln164 contacts (2R)-2-phosphoglycerate. The active-site Proton donor is Glu206. 3 residues coordinate Mg(2+): Asp244, Glu289, and Asp316. (2R)-2-phosphoglycerate is bound by residues Lys341, Arg370, Ser371, and Lys392. Lys341 acts as the Proton acceptor in catalysis.

It belongs to the enolase family. Requires Mg(2+) as cofactor.

It is found in the cytoplasm. It localises to the secreted. Its subcellular location is the cell surface. It catalyses the reaction (2R)-2-phosphoglycerate = phosphoenolpyruvate + H2O. The protein operates within carbohydrate degradation; glycolysis; pyruvate from D-glyceraldehyde 3-phosphate: step 4/5. Catalyzes the reversible conversion of 2-phosphoglycerate (2-PG) into phosphoenolpyruvate (PEP). It is essential for the degradation of carbohydrates via glycolysis. This is Enolase 1 from Desulfitobacterium hafniense (strain Y51).